The primary structure comprises 186 residues: Two-component response regulator ARR6 (186 aa).

The region spanning 26 to 153 is the Response regulatory domain; that stretch reads HVLAVDDSHV…DVKRLRDSLM (128 aa). Aspartate 86 carries the post-translational modification 4-aspartylphosphate.

This sequence belongs to the ARR family. Type-A subfamily. Post-translationally, two-component system major event consists of a His-to-Asp phosphorelay between a sensor histidine kinase (HK) and a response regulator (RR). In plants, the His-to-Asp phosphorelay involves an additional intermediate named Histidine-containing phosphotransfer protein (HPt). This multistep phosphorelay consists of a His-Asp-His-Asp sequential transfer of a phosphate group between first a His and an Asp of the HK protein, followed by the transfer to a conserved His of the HPt protein and finally the transfer to an Asp in the receiver domain of the RR protein. Predominantly expressed in roots.

The protein localises to the nucleus. Functions as a response regulator involved in His-to-Asp phosphorelay signal transduction system. Phosphorylation of the Asp residue in the receiver domain activates the ability of the protein to promote the transcription of target genes. Type-A response regulators seem to act as negative regulators of the cytokinin signaling. In Arabidopsis thaliana (Mouse-ear cress), this protein is Two-component response regulator ARR6 (ARR6).